We begin with the raw amino-acid sequence, 140 residues long: FAD synthase (140 aa).

ATP contacts are provided by residues Thr10–Phe11, His15–His18, and Asn93.

This sequence belongs to the archaeal FAD synthase family. As to quaternary structure, homodimer. A divalent metal cation serves as cofactor.

The enzyme catalyses FMN + ATP + H(+) = FAD + diphosphate. The protein operates within cofactor biosynthesis; FAD biosynthesis; FAD from FMN: step 1/1. Its function is as follows. Catalyzes the transfer of the AMP portion of ATP to flavin mononucleotide (FMN) to produce flavin adenine dinucleotide (FAD) coenzyme. The sequence is that of FAD synthase from Methanocella arvoryzae (strain DSM 22066 / NBRC 105507 / MRE50).